The primary structure comprises 72 residues: Toxin Cll8 (72 aa).

The signal sequence occupies residues 1–4; it reads TVSA. The LCN-type CS-alpha/beta domain occupies 5 to 70; sequence KEGYLVKKSN…TWPLPNKSCG (66 aa). Disulfide bonds link Cys16–Cys69, Cys20–Cys45, Cys29–Cys50, and Cys33–Cys52. A Cysteine amide modification is found at Cys69.

Belongs to the long (4 C-C) scorpion toxin superfamily. Sodium channel inhibitor family. Beta subfamily. In terms of tissue distribution, expressed by the venom gland.

The protein resides in the secreted. Beta toxins bind voltage-independently at site-4 of sodium channels (Nav) and shift the voltage of activation toward more negative potentials thereby affecting sodium channel activation and promoting spontaneous and repetitive firing. This chain is Toxin Cll8, found in Centruroides limpidus (Mexican scorpion).